Here is a 236-residue protein sequence, read N- to C-terminus: Ribosome maturation protein SDO1 homolog (236 aa).

It belongs to the SDO1/SBDS family.

This Pyrococcus horikoshii (strain ATCC 700860 / DSM 12428 / JCM 9974 / NBRC 100139 / OT-3) protein is Ribosome maturation protein SDO1 homolog.